Consider the following 88-residue polypeptide: Small ribosomal subunit protein bS16c (88 aa).

The protein belongs to the bacterial ribosomal protein bS16 family.

The protein resides in the plastid. It is found in the chloroplast. The chain is Small ribosomal subunit protein bS16c from Coffea arabica (Arabian coffee).